The sequence spans 126 residues: Protein ApaG (126 aa).

The 125-residue stretch at N2–H126 folds into the ApaG domain.

The chain is Protein ApaG from Shewanella pealeana (strain ATCC 700345 / ANG-SQ1).